Reading from the N-terminus, the 501-residue chain is Betaine aldehyde dehydrogenase, chloroplastic (501 aa).

The N-terminal 7 residues, 1-7, are a transit peptide targeting the chloroplast; it reads MAIRVPS. Residue 238-243 coordinates NAD(+); sequence GSTATG. The active-site Proton acceptor is the glutamate 260. The Nucleophile role is filled by cysteine 294.

This sequence belongs to the aldehyde dehydrogenase family. As to quaternary structure, homodimer.

It localises to the plastid. It is found in the chloroplast. It carries out the reaction betaine aldehyde + NAD(+) + H2O = glycine betaine + NADH + 2 H(+). Its pathway is amine and polyamine biosynthesis; betaine biosynthesis via choline pathway; betaine from betaine aldehyde: step 1/1. The chain is Betaine aldehyde dehydrogenase, chloroplastic (BADH4) from Amaranthus hypochondriacus (Prince-of-Wales feather).